The primary structure comprises 48 residues: Small, acid-soluble spore protein O (48 aa).

Residues 1-23 are disordered; that stretch reads MVKRKANHVINGMNDAKSQGKGA.

It belongs to the SspO family.

The protein resides in the spore core. This is Small, acid-soluble spore protein O from Bacillus velezensis (strain DSM 23117 / BGSC 10A6 / LMG 26770 / FZB42) (Bacillus amyloliquefaciens subsp. plantarum).